We begin with the raw amino-acid sequence, 907 residues long: Protein MEI2-like 4 (907 aa).

Residues 28 to 58 (QFGFMKNNPMPEGGVDRSSNLPTSSWTSDSY) form a disordered region. Positions 44 to 54 (RSSNLPTSSWT) are enriched in polar residues. RRM domains are found at residues 211-284 (RILF…YSIP) and 295-368 (GALW…PTCP). Positions 856 to 907 (AGPNAGDQEPFPMGSNIRSRPGKHRTNSIENYTNFSSSSDNRDEPANGNDSM) are disordered. The span at 883–894 (SIENYTNFSSSS) shows a compositional bias: polar residues.

Probable RNA-binding protein that plays a role in meiosis and vegetative growth. The sequence is that of Protein MEI2-like 4 (ML4) from Arabidopsis thaliana (Mouse-ear cress).